A 333-amino-acid chain; its full sequence is MKCPSREVFSKFEESTNPQWGKPPSQRSTEEYIKYSLVILDKPRGPSSHEVAAWVKKILGVERAGHAGTLDPKVSGVLPIAIAEGTKVLMALSRSDKVYVAVAKFHGDVDEDKLRAVLQEFQGVIYQKPPLRSAVKRQLRTRRVYSLDLLELDGRYAVIKMHVEAGTYARKIIHDIGEVLGVGANMRELRRIAVSCYTEDEAVTLQDIADAYYIWKHYGDDTYLRRVLLPIEEIARHLPKIWVRDSAVDAICNGAPLAAPGISKFETPFSKGDLVAMFTLKGELIGIGRALVGSEEVKKMERGLVARTDRVVMRRGTYPAMWKRKAKSQSDSA.

The span at 1-14 shows a compositional bias: basic and acidic residues; it reads MKCPSREVFSKFEE. The tract at residues 1–27 is disordered; sequence MKCPSREVFSKFEESTNPQWGKPPSQR. Aspartate 71 serves as the catalytic Nucleophile. The region spanning 238 to 313 is the PUA domain; sequence LPKIWVRDSA…LVARTDRVVM (76 aa).

The protein belongs to the pseudouridine synthase TruB family. Type 2 subfamily.

It catalyses the reaction uridine(55) in tRNA = pseudouridine(55) in tRNA. Its function is as follows. Could be responsible for synthesis of pseudouridine from uracil-55 in the psi GC loop of transfer RNAs. The chain is Probable tRNA pseudouridine synthase B from Pyrobaculum aerophilum (strain ATCC 51768 / DSM 7523 / JCM 9630 / CIP 104966 / NBRC 100827 / IM2).